We begin with the raw amino-acid sequence, 154 residues long: Ribonuclease H (154 aa).

The 142-residue stretch at 1-142 (MKQVDIFTDG…CDTIARGHAS (142 aa)) folds into the RNase H type-1 domain. Mg(2+) is bound by residues aspartate 9, glutamate 47, aspartate 69, and aspartate 134.

This sequence belongs to the RNase H family. As to quaternary structure, monomer. It depends on Mg(2+) as a cofactor.

Its subcellular location is the cytoplasm. It carries out the reaction Endonucleolytic cleavage to 5'-phosphomonoester.. Its function is as follows. Endonuclease that specifically degrades the RNA of RNA-DNA hybrids. This is Ribonuclease H from Oleidesulfovibrio alaskensis (strain ATCC BAA-1058 / DSM 17464 / G20) (Desulfovibrio alaskensis).